The primary structure comprises 280 residues: Putative pyruvate, phosphate dikinase regulatory protein (280 aa).

158-165 (GVSRTSKT) provides a ligand contact to ADP.

This sequence belongs to the pyruvate, phosphate/water dikinase regulatory protein family. PDRP subfamily.

The catalysed reaction is N(tele)-phospho-L-histidyl/L-threonyl-[pyruvate, phosphate dikinase] + ADP = N(tele)-phospho-L-histidyl/O-phospho-L-threonyl-[pyruvate, phosphate dikinase] + AMP + H(+). It catalyses the reaction N(tele)-phospho-L-histidyl/O-phospho-L-threonyl-[pyruvate, phosphate dikinase] + phosphate + H(+) = N(tele)-phospho-L-histidyl/L-threonyl-[pyruvate, phosphate dikinase] + diphosphate. Functionally, bifunctional serine/threonine kinase and phosphorylase involved in the regulation of the pyruvate, phosphate dikinase (PPDK) by catalyzing its phosphorylation/dephosphorylation. The sequence is that of Putative pyruvate, phosphate dikinase regulatory protein from Lactobacillus johnsonii (strain CNCM I-12250 / La1 / NCC 533).